Consider the following 143-residue polypeptide: Large ribosomal subunit protein uL11 (143 aa).

This sequence belongs to the universal ribosomal protein uL11 family. Part of the ribosomal stalk of the 50S ribosomal subunit. Interacts with L10 and the large rRNA to form the base of the stalk. L10 forms an elongated spine to which L12 dimers bind in a sequential fashion forming a multimeric L10(L12)X complex. In terms of processing, one or more lysine residues are methylated.

Functionally, forms part of the ribosomal stalk which helps the ribosome interact with GTP-bound translation factors. The protein is Large ribosomal subunit protein uL11 of Pseudomonas paraeruginosa (strain DSM 24068 / PA7) (Pseudomonas aeruginosa (strain PA7)).